The following is a 126-amino-acid chain: Aspartate 1-decarboxylase (126 aa).

Catalysis depends on S25, which acts as the Schiff-base intermediate with substrate; via pyruvic acid. Residue S25 is modified to Pyruvic acid (Ser). T57 contributes to the substrate binding site. The Proton donor role is filled by Y58. Position 73-75 (73-75 (GAA)) interacts with substrate.

The protein belongs to the PanD family. In terms of assembly, heterooctamer of four alpha and four beta subunits. Requires pyruvate as cofactor. Post-translationally, is synthesized initially as an inactive proenzyme, which is activated by self-cleavage at a specific serine bond to produce a beta-subunit with a hydroxyl group at its C-terminus and an alpha-subunit with a pyruvoyl group at its N-terminus.

It localises to the cytoplasm. The enzyme catalyses L-aspartate + H(+) = beta-alanine + CO2. It participates in cofactor biosynthesis; (R)-pantothenate biosynthesis; beta-alanine from L-aspartate: step 1/1. Functionally, catalyzes the pyruvoyl-dependent decarboxylation of aspartate to produce beta-alanine. The sequence is that of Aspartate 1-decarboxylase from Nitrosococcus oceani (strain ATCC 19707 / BCRC 17464 / JCM 30415 / NCIMB 11848 / C-107).